Consider the following 486-residue polypeptide: ATP synthase subunit beta (486 aa).

Glycine 170 to threonine 177 is a binding site for ATP.

This sequence belongs to the ATPase alpha/beta chains family. F-type ATPases have 2 components, CF(1) - the catalytic core - and CF(0) - the membrane proton channel. CF(1) has five subunits: alpha(3), beta(3), gamma(1), delta(1), epsilon(1). CF(0) has three main subunits: a(1), b(2) and c(9-12). The alpha and beta chains form an alternating ring which encloses part of the gamma chain. CF(1) is attached to CF(0) by a central stalk formed by the gamma and epsilon chains, while a peripheral stalk is formed by the delta and b chains.

The protein localises to the cell membrane. It carries out the reaction ATP + H2O + 4 H(+)(in) = ADP + phosphate + 5 H(+)(out). Produces ATP from ADP in the presence of a proton gradient across the membrane. The catalytic sites are hosted primarily by the beta subunits. The polypeptide is ATP synthase subunit beta (Kineococcus radiotolerans (strain ATCC BAA-149 / DSM 14245 / SRS30216)).